Consider the following 317-residue polypeptide: Melanocyte-stimulating hormone receptor (317 aa).

At 1-37 (MPMHGAQRKLLGSLNSTPTATSNLGLAANHTGAPCLE) the chain is on the extracellular side. Residue Asn29 is glycosylated (N-linked (GlcNAc...) asparagine). A helical membrane pass occupies residues 38-63 (VSIPDGLFLSLGLVSLVENVLVVAAI). The Cytoplasmic portion of the chain corresponds to 64-72 (AKNRNLHSS). The helical transmembrane segment at 73 to 93 (MYCFICCLALSDLLVSGSNML) threads the bilayer. The Extracellular segment spans residues 94–118 (ETAVILLLEAGALATRTSAMQQLHN). Residues 119 to 140 (TIDVLTCSSMLCSLCFLGAIAV) traverse the membrane as a helical segment. Residues 141–163 (DRYISIFYALRYHSIMTLPRAQR) are Cytoplasmic-facing. Residues 164 to 183 (AIAAIWVASXLSSTLFITYY) form a helical membrane-spanning segment. The Extracellular portion of the chain corresponds to 184–191 (DHAAVLLC). A helical transmembrane segment spans residues 192-211 (LVVFFLAMLVLMAVLYVHML). Residues 212–240 (ARACQHAHGIIRLHKRQTPAHQGFGLRGA) lie on the Cytoplasmic side of the membrane. Residues 241–266 (ATLTILLGIFFLCWGPFFLHLTLVVF) traverse the membrane as a helical segment. At 267–279 (CPQHLTCSCIFKN) the chain is on the extracellular side. The chain crosses the membrane as a helical span at residues 280–300 (FKVFLTLIICNTIIDPLIYAF). The Cytoplasmic segment spans residues 301–317 (RSQELRRTLKEVLLCSW). Residue Cys315 is the site of S-palmitoyl cysteine attachment.

Belongs to the G-protein coupled receptor 1 family. As to quaternary structure, interacts with MGRN1, but does not undergo MGRN1-mediated ubiquitination; this interaction competes with GNAS-binding and thus inhibits agonist-induced cAMP production. Interacts with OPN3; the interaction results in a decrease in MC1R-mediated cAMP signaling and ultimately a decrease in melanin production in melanocytes.

It is found in the cell membrane. In terms of biological role, receptor for MSH (alpha, beta and gamma) and ACTH. The activity of this receptor is mediated by G proteins which activate adenylate cyclase. Mediates melanogenesis, the production of eumelanin (black/brown) and phaeomelanin (red/yellow), via regulation of cAMP signaling in melanocytes. This is Melanocyte-stimulating hormone receptor (MC1R) from Saguinus midas (Golden-handed tamarin).